The chain runs to 189 residues: Ion-translocating oxidoreductase complex subunit B (189 aa).

A hydrophobic region spans residues 1–26; sequence MSAIVIAIVVLTILALVFGVLLGFAA. One can recognise a 4Fe-4S domain in the interval 32–90; the sequence is EGNPLTDQIEALLPQTQCGQCGYPGCRPYAEAIANGDKVNKCPPGGAATMEKLADLMGV. [4Fe-4S] cluster contacts are provided by C49, C52, C57, C73, C114, C117, C120, C124, C144, C147, C150, and C154. 2 4Fe-4S ferredoxin-type domains span residues 105–134 and 135–164; these read KVAYIREDECIGCTKCIQACPVDAILGSGK and LMHTVITDYCTGCDLCVAPCPVDCIDMLPV.

This sequence belongs to the 4Fe4S bacterial-type ferredoxin family. RnfB subfamily. In terms of assembly, the complex is composed of six subunits: RnfA, RnfB, RnfC, RnfD, RnfE and RnfG. The cofactor is [4Fe-4S] cluster.

Its subcellular location is the cell inner membrane. Its function is as follows. Part of a membrane-bound complex that couples electron transfer with translocation of ions across the membrane. This Shewanella pealeana (strain ATCC 700345 / ANG-SQ1) protein is Ion-translocating oxidoreductase complex subunit B.